The chain runs to 136 residues: Histone H3.3C-like (136 aa).

R3 is modified (asymmetric dimethylarginine; by PRMT6; alternate). The residue at position 3 (R3) is a Citrulline; alternate. Residue T4 is modified to Phosphothreonine; by HASPIN. Position 5 is an allysine; alternate (K5). The residue at position 5 (K5) is an N6,N6,N6-trimethyllysine; alternate. K5 carries the post-translational modification N6,N6-dimethyllysine; alternate. The residue at position 5 (K5) is an N6-(2-hydroxyisobutyryl)lysine; alternate. N6-(beta-hydroxybutyryl)lysine; alternate is present on K5. N6-acetyllysine; alternate is present on K5. K5 carries the N6-methyllysine; alternate modification. Residue T7 is modified to Phosphothreonine; by PKC. Position 10 is an N6,N6,N6-trimethyllysine; alternate (K10). K10 is subject to N6,N6-dimethyllysine; alternate. N6-(2-hydroxyisobutyryl)lysine; alternate is present on K10. K10 is subject to N6-acetyllysine; alternate. The residue at position 10 (K10) is an N6-methyllysine; alternate. The residue at position 11 (S11) is an ADP-ribosylserine; alternate. A Phosphoserine; alternate; by AURKB, AURKC, RPS6KA3, RPS6KA4 and RPS6KA5 modification is found at S11. T12 bears the Phosphothreonine; by PKC mark. K15 is subject to N6-(2-hydroxyisobutyryl)lysine; alternate. N6-(beta-hydroxybutyryl)lysine; alternate is present on K15. The residue at position 15 (K15) is an N6-acetyllysine; alternate. N6-glutaryllysine; alternate is present on K15. K15 is modified (N6-succinyllysine; alternate). Residue R18 is modified to Citrulline; alternate. R18 carries the post-translational modification Asymmetric dimethylarginine; by CARM1; alternate. K19 and K28 each carry N6-(2-hydroxyisobutyryl)lysine; alternate. Residue K19 is modified to N6-(beta-hydroxybutyryl)lysine; alternate. 2 positions are modified to N6-acetyllysine; alternate: K19 and K28. K19 and K28 each carry N6-methyllysine; alternate. 2 positions are modified to N6-glutaryllysine; alternate: K19 and K28. K19 carries the post-translational modification N6-butyryllysine; alternate. Position 28 is an N6,N6,N6-trimethyllysine; alternate (K28). K28 is subject to N6,N6-dimethyllysine; alternate. S29 bears the ADP-ribosylserine; alternate mark. S29 carries the phosphoserine; alternate; by AURKB, AURKC and RPS6KA5 modification. S32 bears the Phosphoserine mark. At K38 the chain carries N6-methyllysine. Y42 carries the phosphotyrosine modification. Residue K57 is modified to N6,N6,N6-trimethyllysine; alternate. K57 carries the post-translational modification N6-(2-hydroxyisobutyryl)lysine; alternate. N6-(beta-hydroxybutyryl)lysine; alternate is present on K57. The residue at position 57 (K57) is an N6-acetyllysine; alternate. N6-glutaryllysine; alternate is present on K57. K57 carries the post-translational modification N6-succinyllysine; alternate. K57 is modified (N6-methyllysine; by EHMT2; alternate). Position 58 is a phosphoserine (S58). N6-(2-hydroxyisobutyryl)lysine; alternate occurs at positions 65 and 80. N6-methyllysine; alternate occurs at positions 65 and 80. The residue at position 80 (K80) is an N6,N6,N6-trimethyllysine; alternate. Residue K80 is modified to N6,N6-dimethyllysine; alternate. K80 is subject to N6-acetyllysine; alternate. K80 carries the N6-glutaryllysine; alternate modification. At K80 the chain carries N6-succinyllysine; alternate. T81 bears the Phosphothreonine mark. S87 is subject to Phosphoserine.

The protein belongs to the histone H3 family. As to quaternary structure, the nucleosome is a histone octamer containing two molecules each of H2A, H2B, H3 and H4 assembled in one H3-H4 heterotetramer and two H2A-H2B heterodimers. The octamer wraps approximately 147 bp of DNA. Acetylation is generally linked to gene activation. Acetylation on Lys-19 favors methylation at Arg-18. Post-translationally, citrullination at Arg-18 by PADI4 impairs methylation and represses transcription. In terms of processing, asymmetric dimethylation at Arg-18 (H3R17me2a) by CARM1 is linked to gene activation. Asymmetric dimethylation at Arg-3 (H3R2me2a) by PRMT6 is linked to gene repression and is mutually exclusive with H3 Lys-5 methylation (H3K4me2 and H3K4me3). H3R2me2a is present at the 3' of genes regardless of their transcription state and is enriched on inactive promoters, while it is absent on active promoters. Methylation at Lys-5 (H3K4me) and Lys-80 (H3K79me) are linked to gene activation. Methylation at Lys-5 (H3K4me) facilitates subsequent acetylation of H3 and H4. Methylation at Lys-80 (H3K79me) is associated with DNA double-strand break (DSB) responses and is a specific target for TP53BP1. Methylation at Lys-10 (H3K9me) and Lys-28 (H3K27me) are linked to gene repression. Methylation at Lys-10 (H3K9me) is a specific target for HP1 proteins (CBX1, CBX3 and CBX5) and prevents subsequent phosphorylation at Ser-11 (H3S10ph) and acetylation of H3 and H4. Methylation at Lys-5 (H3K4me) and Lys-80 (H3K79me) require preliminary monoubiquitination of H2B at 'Lys-120'. Methylation at Lys-10 (H3K9me) and Lys-28 (H3K27me) are enriched in inactive X chromosome chromatin. Monomethylation at Lys-57 (H3K56me1) by EHMT2/G9A in G1 phase promotes interaction with PCNA and is required for DNA replication. Post-translationally, phosphorylated at Thr-4 (H3T3ph) by HASPIN during prophase and dephosphorylated during anaphase. Phosphorylation at Ser-11 (H3S10ph) by AURKB is crucial for chromosome condensation and cell-cycle progression during mitosis and meiosis. In addition phosphorylation at Ser-11 (H3S10ph) by RPS6KA4 and RPS6KA5 is important during interphase because it enables the transcription of genes following external stimulation, like mitogens, stress, growth factors or UV irradiation and result in the activation of genes, such as c-fos and c-jun. Phosphorylation at Ser-11 (H3S10ph), which is linked to gene activation, prevents methylation at Lys-10 (H3K9me) but facilitates acetylation of H3 and H4. Phosphorylation at Ser-11 (H3S10ph) by AURKB mediates the dissociation of HP1 proteins (CBX1, CBX3 and CBX5) from heterochromatin. Phosphorylation at Ser-11 (H3S10ph) is also an essential regulatory mechanism for neoplastic cell transformation. Phosphorylated at Ser-29 (H3S28ph) by MAP3K20 isoform 1, RPS6KA5 or AURKB during mitosis or upon ultraviolet B irradiation. Phosphorylation at Thr-7 (H3T6ph) by PRKCB is a specific tag for epigenetic transcriptional activation that prevents demethylation of Lys-5 (H3K4me) by LSD1/KDM1A. At centromeres, specifically phosphorylated at Thr-12 (H3T11ph) from prophase to early anaphase, by DAPK3 and PKN1. Phosphorylation at Thr-12 (H3T11ph) by PKN1 or isoform M2 of PKM (PKM2) is a specific tag for epigenetic transcriptional activation that promotes demethylation of Lys-10 (H3K9me) by KDM4C/JMJD2C. Phosphorylation at Tyr-42 (H3Y41ph) by JAK2 promotes exclusion of CBX5 (HP1 alpha) from chromatin. In terms of processing, lysine deamination at Lys-5 (H3K4all) to form allysine is mediated by LOXL2. Allysine formation by LOXL2 only takes place on H3K4me3 and results in gene repression. Butyrylation of histones marks active promoters and competes with histone acetylation. It is present during late spermatogenesis. Post-translationally, succinylation at Lys-80 (H3K79succ) by KAT2A takes place with a maximum frequency around the transcription start sites of genes. It gives a specific tag for epigenetic transcription activation. In terms of processing, serine ADP-ribosylation constitutes the primary form of ADP-ribosylation of proteins in response to DNA damage. Serine ADP-ribosylation at Ser-11 (H3S10ADPr) is mutually exclusive with phosphorylation at Ser-11 (H3S10ph) and impairs acetylation at Lys-10 (H3K9ac).

It localises to the nucleus. It is found in the chromosome. Core component of nucleosome. Nucleosomes wrap and compact DNA into chromatin, limiting DNA accessibility to the cellular machineries which require DNA as a template. Histones thereby play a central role in transcription regulation, DNA repair, DNA replication and chromosomal stability. DNA accessibility is regulated via a complex set of post-translational modifications of histones, also called histone code, and nucleosome remodeling. This is Histone H3.3C-like from Bos taurus (Bovine).